A 210-amino-acid polypeptide reads, in one-letter code: MQQHLMQMQPMMAGYYPSNVTSDHIQQYLDENKSLILKIVESQNSGKLSECAENQARLQRNLMYLAAIADSQPQPPSVHSQYGSAGGGMIQGEGGSHYLQQQQATQQQQMTQQSLMAARSSMLYAQQQQQQQPYATLQHQQLHHSQLGMSSSSGGGGSSGLHILQGEAGGFHDFGRGKPEMGSGGGGEGRGGSSGDGGETLYLKSSDDGN.

A compositionally biased stretch (low complexity) spans 135–152; sequence ATLQHQQLHHSQLGMSSS. Residues 135–210 form a disordered region; sequence ATLQHQQLHH…LYLKSSDDGN (76 aa). Over residues 182–198 the composition is skewed to gly residues; it reads GSGGGGEGRGGSSGDGG.

It belongs to the SS18 family. As to quaternary structure, interacts with GRF1, GRF2, GRF5 and GRF9. In terms of tissue distribution, strongly expressed in actively growing and developing tissues, such as roots, upper stems, and shoot tips and flower buds. Also expressed in mature flowers. Not expressed in the shoot apical meristem (SAM). Highly accumulated in the proximal part of leaf primordia, in the key proliferative zone at the junction region between the leaf blade and leaf petiole.

Functionally, transcription coactivator that plays a role in the regulation of cell expansion in leaf and cotyledons tissues. Component of a network formed by miR396, the GRFs and their interacting factors (GIFs) acting in the regulation of meristem function, at least partially through the control of cell proliferation. Appears to function synergistically with GRF1 as a transcriptional coactivator. Acts together with GRF5 for the development of appropriate leaf size and shape through the promotion and/or maintenance of cell proliferation activity in leaf primordia. Plays a role in adaxial/abaxial patterning and growth in leaf morphogenesis. GIFs are involved in the positive regulation of cell proliferation of lateral organs in a functionally redundant manner. Together with GATA18/HAN, mediates cotyledon identity by preventing ectopic root formation through the repression of PLT1 expression. This is GRF1-interacting factor 1 from Arabidopsis thaliana (Mouse-ear cress).